The following is a 222-amino-acid chain: MEIPPTHYAASRAASVAENCINYQQGTPHKLFLVQTVQQASKEDIPGRGHKYHLKFSVEEIIQKQVTVNCTAEVLYPQMGQGSAPEVNFTFEGEIGKNPDEEDNTFYQSLMSLKRPLEAQDIPDNFGNVSPQMKPVQHLAWVACGYVMWQNSTEDTWYKMLKIQTVKQVQRNDDFIELDYTILLHDIASQEIIPWQMQVLWHPQYGTKVKHNSRLPKEGQAE.

A Cystatin LXN-type 1 domain is found at 1–97 (MEIPPTHYAA…NFTFEGEIGK (97 aa)). Lys55 bears the N6-acetyllysine mark. Positions 98–117 (NPDEEDNTFYQSLMSLKRPL) are alpha-helical linker. The Cystatin LXN-type 2 domain maps to 118 to 222 (EAQDIPDNFG…SRLPKEGQAE (105 aa)).

Belongs to the protease inhibitor I47 (latexin) family. In terms of tissue distribution, highly enriched in macrophages.

It is found in the cytoplasm. Functionally, hardly reversible, non-competitive, and potent inhibitor of CPA1, CPA2 and CPA4. May play a role in inflammation. In Mus musculus (Mouse), this protein is Latexin (Lxn).